Consider the following 223-residue polypeptide: Membrane-associated progesterone receptor component 2 (223 aa).

The interval M1–A33 is disordered. A glycan (O-linked (Xyl...) (chondroitin sulfate) serine) is linked at S15. Residues S15–A33 are compositionally biased toward low complexity. A helical membrane pass occupies residues A42 to L66. Phosphoserine occurs at positions 90, 104, and 208. The 100-residue stretch at D102–L201 folds into the Cytochrome b5 heme-binding domain. The segment at K202–D223 is disordered. Residues E206–D215 are compositionally biased toward acidic residues. Phosphotyrosine is present on Y210. Residue T211 is modified to Phosphothreonine.

The protein belongs to the cytochrome b5 family. MAPR subfamily. Interacts with PGRMC1. Interacts with AAAS. As to expression, expressed by endometrial glands and stroma (at protein level). Detected in urine (at protein level).

The protein localises to the membrane. It localises to the nucleus envelope. The protein resides in the endoplasmic reticulum. It is found in the secreted. Required for the maintenance of uterine histoarchitecture and normal female reproductive lifespan. May serve as a universal non-classical progesterone receptor in the uterus. Intracellular heme chaperone required for delivery of labile, or signaling heme, to the nucleus. Plays a role in adipocyte function and systemic glucose homeostasis. In brown fat, which has a high demand for heme, delivery of labile heme in the nucleus regulates the activity of heme-responsive transcriptional repressors such as NR1D1 and BACH1. The polypeptide is Membrane-associated progesterone receptor component 2 (Homo sapiens (Human)).